Reading from the N-terminus, the 367-residue chain is Trans-enoyl reductase opdC (367 aa).

Residues 47–50 (YDAK), 199–202 (SPHN), Tyr217, 264–265 (LD), and 353–354 (IT) each bind NADP(+).

Belongs to the zinc-containing alcohol dehydrogenase family. As to quaternary structure, monomer.

Its pathway is secondary metabolite biosynthesis. Functionally, trans-enoyl reductase; part of the gene cluster that mediates the biosynthesis of oxopyrrolidines, polyketide-amino acid hybrid compounds with feature structures of tetramic acid. The polyketide chain is first assembled by the highly reducing PKS module of opdA using acetyl-CoA as the starter unit and five malonyl-CoA as the extender units. OpdC acts as a trans-acting enoyl reductase and reduces the terminal alkenyl to alkane. The 17R in oxopyrrolidine A and 15R, 17S in oxopyrrolidine B are generated by non-stereospecific catalysis of the ketoreductase (KR) domain and enoyl reductases. Then the polyketides with specific configurations are transferred to the NRPS module of opdA and linked to L-tyrosine to form an amide bond. Finally, the oxopyrrolidines are offloaded through a Dieckmann cyclization catalyzed by the terminal D domain to give a tetramic acid moiety. The polypeptide is Trans-enoyl reductase opdC (Penicillium oxalicum (strain 114-2 / CGMCC 5302) (Penicillium decumbens)).